A 308-amino-acid polypeptide reads, in one-letter code: MSAQKPGLHPRNRHHSRYDLATLCQVNPELKQFLTLTPAGEQSVDFANPLAVKALNKALLAHFYAVANWDIPDGFLCPPVPGRADYIHHLADLLAEASGTIPARASILDIGVGANCIYPLIGVHEYGWRFTGSETSSQALSSAQAIISANPGLNRAIRLRRQKESGAIFNGIIHKNEQYDATLCNPPFHDSAAAARAGSERKRRNLGLNKDDALNFGGQQQELWCEGGEVTFIKKMIEESKGFAKQVMWFTSLVSRGENLPPLYRALTDVGAVKVVKKEMAQGQKQSRFIAWTFMNDEQRRRFVNRQR.

It belongs to the methyltransferase superfamily. METTL16/RlmF family.

The protein localises to the cytoplasm. The catalysed reaction is adenosine(1618) in 23S rRNA + S-adenosyl-L-methionine = N(6)-methyladenosine(1618) in 23S rRNA + S-adenosyl-L-homocysteine + H(+). Its function is as follows. Specifically methylates the adenine in position 1618 of 23S rRNA. The chain is Ribosomal RNA large subunit methyltransferase F from Escherichia fergusonii (strain ATCC 35469 / DSM 13698 / CCUG 18766 / IAM 14443 / JCM 21226 / LMG 7866 / NBRC 102419 / NCTC 12128 / CDC 0568-73).